Consider the following 118-residue polypeptide: MASQSQGIQQLLQAEKRAAEKVADARKRKARRLKQAKEEAQMEVDQYRREREQEFQSKQQAAMGSQGNLSAEVEQATRRQVQGMQSSQQRNRERVLAQLLGMVCDVRPQVHPNYRIAA.

The stretch at 8–57 forms a coiled coil; that stretch reads IQQLLQAEKRAAEKVADARKRKARRLKQAKEEAQMEVDQYRREREQEFQS. Residues 25–90 are disordered; the sequence is ARKRKARRLK…VQGMQSSQQR (66 aa). The span at 35 to 55 shows a compositional bias: basic and acidic residues; that stretch reads QAKEEAQMEVDQYRREREQEF. 2 stretches are compositionally biased toward polar residues: residues 56–69 and 78–89; these read QSKQQAAMGSQGNL and RRQVQGMQSSQQ.

The protein belongs to the V-ATPase G subunit family. In terms of assembly, V-ATPase is a heteromultimeric enzyme made up of two complexes: the ATP-hydrolytic V1 complex and the proton translocation V0 complex. The V1 complex consists of three catalytic AB heterodimers that form a heterohexamer, three peripheral stalks each consisting of EG heterodimers, one central rotor including subunits D and F, and the regulatory subunits C and H. The proton translocation complex V0 consists of the proton transport subunit a, a ring of proteolipid subunits c9c'', rotary subunit d, subunits e and f, and the accessory subunits ATP6AP1/Ac45 and ATP6AP2/PRR. Expressed in brain (at protein level).

The protein resides in the melanosome. Its subcellular location is the cytoplasmic vesicle. The protein localises to the clathrin-coated vesicle membrane. Functionally, subunit of the V1 complex of vacuolar(H+)-ATPase (V-ATPase), a multisubunit enzyme composed of a peripheral complex (V1) that hydrolyzes ATP and a membrane integral complex (V0) that translocates protons. V-ATPase is responsible for acidifying and maintaining the pH of intracellular compartments and in some cell types, is targeted to the plasma membrane, where it is responsible for acidifying the extracellular environment. The chain is V-type proton ATPase subunit G 2 from Bos taurus (Bovine).